Here is a 177-residue protein sequence, read N- to C-terminus: MLALLKQFSEKRFVWFLLAFSSLALESTALYFQYGMGLQPCVLCVYERLAMIGLFVAGIIALLQPLAFILRLIALALGLFSSIKGLLISFRHLDLQMNPAPWKQCEFIPNFPETLPFHQWFPFIFNPTGSCNESQWSLFGLTMVQWLVVIFSLYVVILTLLLIAQVIKTRKQRRLFN.

The Cytoplasmic segment spans residues 1 to 14 (MLALLKQFSEKRFV). The helical transmembrane segment at 15–31 (WFLLAFSSLALESTALY) threads the bilayer. Residues 32-49 (FQYGMGLQPCVLCVYERL) are Periplasmic-facing. Cys-41 and Cys-44 are disulfide-bonded. A helical transmembrane segment spans residues 50–65 (AMIGLFVAGIIALLQP). Topologically, residues 66 to 72 (LAFILRL) are cytoplasmic. A helical transmembrane segment spans residues 73 to 90 (IALALGLFSSIKGLLISF). Residues 91–145 (RHLDLQMNPAPWKQCEFIPNFPETLPFHQWFPFIFNPTGSCNESQWSLFGLTMVQ) lie on the Periplasmic side of the membrane. An intrachain disulfide couples Cys-105 to Cys-131. The helical transmembrane segment at 146–164 (WLVVIFSLYVVILTLLLIA) threads the bilayer. Residues 165 to 177 (QVIKTRKQRRLFN) are Cytoplasmic-facing.

The protein belongs to the DsbB family.

Its subcellular location is the cell inner membrane. Functionally, required for disulfide bond formation in some periplasmic proteins. Acts by oxidizing the DsbA protein. The sequence is that of Disulfide bond formation protein B from Haemophilus influenzae (strain 86-028NP).